The sequence spans 582 residues: Mitogen-activated protein kinase 17 (582 aa).

Positions 22 to 61 are disordered; it reads SSSFHLTTTGDDTVKDLHDPRREDAEGDGWEEVHEGPESD. The segment covering 33–45 has biased composition (basic and acidic residues); sequence DTVKDLHDPRRED. The Protein kinase domain maps to 105-396; that stretch reads YKVSEVIGKG…AEEALTDPYF (292 aa). Residues 111–119 and Lys134 each bind ATP; that span reads IGKGSYGVV. The active-site Proton acceptor is Asp231. Position 267 is a phosphothreonine (Thr267). The TXY motif lies at 267–269; it reads TDY. Tyr269 is modified (phosphotyrosine). Disordered regions lie at residues 474 to 502 and 542 to 582; these read EGVSKGEKSSPQLRQNASLPRERAIGNKH and ISAS…QLKT. Over residues 482-491 the composition is skewed to polar residues; sequence SSPQLRQNAS. The span at 493 to 502 shows a compositional bias: basic and acidic residues; it reads PRERAIGNKH. A compositionally biased stretch (acidic residues) spans 557–572; sequence DQEDSLTESMDETADE.

It belongs to the protein kinase superfamily. CMGC Ser/Thr protein kinase family. MAP kinase subfamily. Dually phosphorylated on Thr-267 and Tyr-269, which activates the enzyme.

The enzyme catalyses L-seryl-[protein] + ATP = O-phospho-L-seryl-[protein] + ADP + H(+). It catalyses the reaction L-threonyl-[protein] + ATP = O-phospho-L-threonyl-[protein] + ADP + H(+). Activated by threonine and tyrosine phosphorylation. The polypeptide is Mitogen-activated protein kinase 17 (MPK17) (Oryza sativa subsp. japonica (Rice)).